Here is a 124-residue protein sequence, read N- to C-terminus: Small ribosomal subunit protein uS12 (124 aa).

The interval 1–25 is disordered; sequence MATINQLVRKPRQASTYKSASPALD.

Belongs to the universal ribosomal protein uS12 family. As to quaternary structure, part of the 30S ribosomal subunit. Contacts proteins S8 and S17. May interact with IF1 in the 30S initiation complex.

Functionally, with S4 and S5 plays an important role in translational accuracy. Interacts with and stabilizes bases of the 16S rRNA that are involved in tRNA selection in the A site and with the mRNA backbone. Located at the interface of the 30S and 50S subunits, it traverses the body of the 30S subunit contacting proteins on the other side and probably holding the rRNA structure together. The combined cluster of proteins S8, S12 and S17 appears to hold together the shoulder and platform of the 30S subunit. The sequence is that of Small ribosomal subunit protein uS12 from Xylella fastidiosa (strain 9a5c).